Consider the following 509-residue polypeptide: Sulfoacetate--CoA ligase (509 aa).

Positions 320–340 (AFSNPLDPGQRRIGSIGRPSG) are disordered.

Belongs to the ATP-dependent AMP-binding enzyme family.

The protein localises to the cytoplasm. The catalysed reaction is sulfoacetate + ATP + CoA = sulfoacetyl-CoA + AMP + diphosphate. In terms of biological role, involved in the degradation of sulfoacetate, a widespread natural product. Catalyzes the CoA- and ATP-dependent conversion of sulfoacetate to sulfoacetyl-CoA and AMP. This chain is Sulfoacetate--CoA ligase, found in Cupriavidus necator (strain ATCC 17699 / DSM 428 / KCTC 22496 / NCIMB 10442 / H16 / Stanier 337) (Ralstonia eutropha).